Here is a 185-residue protein sequence, read N- to C-terminus: Large ribosomal subunit protein uL5 (185 aa).

It belongs to the universal ribosomal protein uL5 family. In terms of assembly, part of the 50S ribosomal subunit; part of the 5S rRNA/L5/L18/L25 subcomplex. Contacts the 5S rRNA and the P site tRNA. Forms a bridge to the 30S subunit in the 70S ribosome.

Functionally, this is one of the proteins that bind and probably mediate the attachment of the 5S RNA into the large ribosomal subunit, where it forms part of the central protuberance. In the 70S ribosome it contacts protein S13 of the 30S subunit (bridge B1b), connecting the 2 subunits; this bridge is implicated in subunit movement. Contacts the P site tRNA; the 5S rRNA and some of its associated proteins might help stabilize positioning of ribosome-bound tRNAs. The sequence is that of Large ribosomal subunit protein uL5 from Bradyrhizobium sp. (strain BTAi1 / ATCC BAA-1182).